The chain runs to 172 residues: Large ribosomal subunit protein uL10 (172 aa).

It belongs to the universal ribosomal protein uL10 family. In terms of assembly, part of the ribosomal stalk of the 50S ribosomal subunit. The N-terminus interacts with L11 and the large rRNA to form the base of the stalk. The C-terminus forms an elongated spine to which L12 dimers bind in a sequential fashion forming a multimeric L10(L12)X complex.

Functionally, forms part of the ribosomal stalk, playing a central role in the interaction of the ribosome with GTP-bound translation factors. The sequence is that of Large ribosomal subunit protein uL10 from Methylobacterium radiotolerans (strain ATCC 27329 / DSM 1819 / JCM 2831 / NBRC 15690 / NCIMB 10815 / 0-1).